The following is a 135-amino-acid chain: Ribonuclease P protein component 2 (135 aa).

The protein belongs to the eukaryotic/archaeal RNase P protein component 2 family. In terms of assembly, consists of a catalytic RNA component and at least 4-5 protein subunits.

It is found in the cytoplasm. It catalyses the reaction Endonucleolytic cleavage of RNA, removing 5'-extranucleotides from tRNA precursor.. Its function is as follows. Part of ribonuclease P, a protein complex that generates mature tRNA molecules by cleaving their 5'-ends. The protein is Ribonuclease P protein component 2 of Methanococcus aeolicus (strain ATCC BAA-1280 / DSM 17508 / OCM 812 / Nankai-3).